The chain runs to 905 residues: DNA gyrase subunit A (905 aa).

Residues 35 to 524 form the Topo IIA-type catalytic domain; sequence IPDVRDGLKP…GEFDQDIEDL (490 aa). The active-site O-(5'-phospho-DNA)-tyrosine intermediate is the tyrosine 123. The GyrA-box motif lies at 551-557; that stretch reads QKRGGKG. Residues 885–905 are disordered; sequence TAESEEDSELEEEGLEQSEEV. Residues 886 to 905 are compositionally biased toward acidic residues; it reads AESEEDSELEEEGLEQSEEV.

This sequence belongs to the type II topoisomerase GyrA/ParC subunit family. As to quaternary structure, heterotetramer, composed of two GyrA and two GyrB chains. In the heterotetramer, GyrA contains the active site tyrosine that forms a transient covalent intermediate with DNA, while GyrB binds cofactors and catalyzes ATP hydrolysis.

It localises to the cytoplasm. The enzyme catalyses ATP-dependent breakage, passage and rejoining of double-stranded DNA.. Functionally, a type II topoisomerase that negatively supercoils closed circular double-stranded (ds) DNA in an ATP-dependent manner to modulate DNA topology and maintain chromosomes in an underwound state. Negative supercoiling favors strand separation, and DNA replication, transcription, recombination and repair, all of which involve strand separation. Also able to catalyze the interconversion of other topological isomers of dsDNA rings, including catenanes and knotted rings. Type II topoisomerases break and join 2 DNA strands simultaneously in an ATP-dependent manner. The chain is DNA gyrase subunit A from Rickettsia conorii (strain ATCC VR-613 / Malish 7).